The sequence spans 662 residues: Polyunsaturated fatty acid lipoxygenase ALOX15 (662 aa).

The 113-residue stretch at 2 to 114 (GLYRIRVSTG…VLSLPEGTGR (113 aa)) folds into the PLAT domain. The Lipoxygenase domain occupies 115 to 662 (TVGEDPQGLF…PSVVENSVAI (548 aa)). Histidine 360, histidine 365, histidine 540, histidine 544, and isoleucine 662 together coordinate Fe cation.

The protein belongs to the lipoxygenase family. As to quaternary structure, interacts with PEBP1; in response to IL13/interleukin-13, prevents the interaction of PEBP1 with RAF1 to activate the ERK signaling cascade. Fe cation serves as cofactor. Detected in monocytes and eosinophils (at protein level). Expressed in airway epithelial cells.

It is found in the cytoplasm. The protein localises to the cytosol. It localises to the cell membrane. The protein resides in the lipid droplet. The enzyme catalyses (5Z,8Z,11Z,14Z)-eicosatetraenoate + O2 = (12S)-hydroperoxy-(5Z,8Z,10E,14Z)-eicosatetraenoate. The catalysed reaction is (5Z,8Z,11Z,14Z)-eicosatetraenoate + O2 = (15S)-hydroperoxy-(5Z,8Z,11Z,13E)-eicosatetraenoate. It catalyses the reaction (9Z,12Z)-octadecadienoate + O2 = (13S)-hydroperoxy-(9Z,11E)-octadecadienoate. It carries out the reaction (5Z,8Z,11Z,14Z)-eicosatetraenoate + 2 O2 = (14R,15S)-dihydroperoxy-(5Z,8Z,10E,12E)-eicosatetraenoate. The enzyme catalyses (5Z,8Z,11Z,14Z)-eicosatetraenoate + 2 O2 = (8S,15S)-dihydroperoxy-(5Z,9E,11Z,13E)-eicosatetraenoate. The catalysed reaction is (14S,15R)-epoxy-(5Z,8Z,11Z)-eicosatrienoate + O2 = (8S)-hydroperoxy-(14S,15R)-epoxy-(5Z,9E,11Z)-eicosatrienoate. It catalyses the reaction (14S,15R)-epoxy-(5Z,8Z,11Z)-eicosatrienoate + O2 = (12S)-hydroperoxy-(14S,15R)-epoxy-(5Z,8Z,10E)-eicosatrienoate. It carries out the reaction (14R,15S)-epoxy-(5Z,8Z,11Z)-eicosatrienoate + O2 = (5S)-hydroperoxy-(14R,15S)-epoxy-(6E,8Z,11Z)-eicosatrienoate. The enzyme catalyses (14R,15S)-epoxy-(5Z,8Z,11Z)-eicosatrienoate + O2 = (12S)-hydroperoxy-(14R,15S)-epoxy-(5Z,8Z,10E)-eicosatrienoate. The catalysed reaction is (15R)-hydroperoxy-(5Z,8Z,11Z,13E)-eicosatetraenoate = 15-oxo-(5Z,8Z,11Z,13E)-eicosatetraenoate + H2O. It catalyses the reaction (15S)-hydroperoxy-(5Z,8Z,11Z,13E)-eicosatetraenoate = (14S,15S)-epoxy-(5Z,8Z,10E,12E)-eicosatetraenoate + H2O. It carries out the reaction (12S)-hydroperoxy-(5Z,8Z,10E,14Z)-eicosatetraenoate = (8S)-hydroxy-(11S,12S)-epoxy-(5Z,9E,14Z)-eicosatrienoate. The enzyme catalyses (4Z,7Z,10Z,13Z,16Z,19Z)-docosahexaenoate + O2 = (14S)-hydroperoxy-(4Z,7Z,10Z,12E,16Z,19Z)-docosahexaenoate. The catalysed reaction is (4Z,7Z,10Z,13Z,16Z,19Z)-docosahexaenoate + O2 = (17S)-hydroperoxy-(4Z,7Z,10Z,13Z,15E,19Z)-docosahexaenoate. It catalyses the reaction (7S)-hydroperoxy-(4Z,8E,10Z,13Z,16Z,19Z)-docosahexaenoate + O2 = (7S,14S)-dihydroperoxy-(4Z,8E,10Z,12E,16Z,19Z)-docosahexaenoate. It carries out the reaction (7S)-hydroperoxy-(4Z,8E,10Z,13Z,16Z,19Z)-docosahexaenoate + O2 = (7S,17S)-dihydroperoxy-(4Z,8E,10Z,13Z,15E,19Z)-docosahexaenoate. The enzyme catalyses (4Z,7Z,10Z,13Z,16Z,19Z)-docosahexaenoate + O2 = (11S)-hydroperoxy-(4Z,7Z,9E,13Z,16Z,19Z)-docosahexaenoate. The catalysed reaction is (7Z,10Z,13Z,16Z,19Z)-docosapentaenoate + O2 = 14-hydroperoxy-(7Z,10Z,12E,16Z,19Z)-docosapentaenoate. It catalyses the reaction (4Z,7Z,10Z,13Z,16Z)-docosapentaenoate + O2 = 14-hydroperoxy-(4Z,7Z,10Z,12E,16Z)-docosapentaenoate. It carries out the reaction N-(5Z,8Z,11Z,14Z)-eicosatetraenoyl-taurine + O2 = N-(12S)-hydroperoxy-(5Z,8Z,10E,14Z)-eicosatetraenoyl-taurine. The enzyme catalyses N-(5Z,8Z,11Z,14Z)-eicosatetraenoyl-gamma-aminobutanoate + O2 = N-(12S)-hydroperoxy-(5Z,8Z,10E,14Z)-eicosatetraenoyl-gamma-aminobutanoate. The catalysed reaction is N-(5Z,8Z,11Z,14Z)-eicosatetraenoyl-glycine + O2 = N-(12S)-hydroperoxy-(5Z,8Z,10E,14Z)-eicosatetraenoyl-glycine. It catalyses the reaction N-(5Z,8Z,11Z,14Z)-eicosatetraenoyl-L-alanine + O2 = N-(12S)-hydroperoxy-(5Z,8Z,10E,14Z)-eicosatetraenoyl-alanine. It carries out the reaction N-(5Z,8Z,11Z,14Z)-eicosatetraenoyl-taurine + O2 = N-(15S)-hydroperoxy-(5Z,8Z,11Z,13E)-eicosatetraenoyl-taurine. The enzyme catalyses N-(5Z,8Z,11Z,14Z)-eicosatetraenoyl-gamma-aminobutanoate + O2 = N-(15S)-hydroperoxy-(5Z,8Z,11Z,13E)-eicosatetraenoyl-gamma-aminobutanoate. The catalysed reaction is N-(5Z,8Z,11Z,14Z)-eicosatetraenoyl-glycine + O2 = N-(15S)-hydroperoxy-(5Z,8Z,11Z,13E)-eicosatetraenoyl-glycine. It catalyses the reaction N-(5Z,8Z,11Z,14Z)-eicosatetraenoyl-L-alanine + O2 = N-(15S)-hydroperoxy-(5Z,8Z,11Z,13E)-eicosatetraenoyl-alanine. It participates in lipid metabolism; hydroperoxy eicosatetraenoic acid biosynthesis. With respect to regulation, activity is increased by binding phosphatidylinositol phosphates, especially phosphatidylinositol 3,4-bisphosphate and phosphatidylinositol 4,5-bisphosphate. Inactivated at 37 degrees Celsius by (13S)-hydroperoxy-(9Z,11E)-octadecadienoate. Non-heme iron-containing dioxygenase that catalyzes the stereo-specific peroxidation of free and esterified polyunsaturated fatty acids generating a spectrum of bioactive lipid mediators. It inserts peroxyl groups at C12 or C15 of arachidonate ((5Z,8Z,11Z,14Z)-eicosatetraenoate) producing both 12-hydroperoxyeicosatetraenoate/12-HPETE and 15-hydroperoxyeicosatetraenoate/15-HPETE. It may then act on 12-HPETE to produce hepoxilins, which may show pro-inflammatory properties. Can also peroxidize linoleate ((9Z,12Z)-octadecadienoate) to 13-hydroperoxyoctadecadienoate/13-HPODE. May participate in the sequential oxidations of DHA ((4Z,7Z,10Z,13Z,16Z,19Z)-docosahexaenoate) to generate specialized pro-resolving mediators (SPMs)like resolvin D5 ((7S,17S)-diHPDHA) and (7S,14S)-diHPDHA, that actively down-regulate the immune response and have anti-aggregation properties with platelets. Can convert epoxy fatty acids to hydroperoxy-epoxides derivatives followed by an intramolecular nucleophilic substitution leading to the formation of monocyclic endoperoxides. Plays an important role during the maintenance of self-tolerance by peroxidizing membrane-bound phosphatidylethanolamine which can then signal the sorting process for clearance of apoptotic cells during inflammation and prevent an autoimmune response. In addition to its role in the immune and inflammatory responses, this enzyme may play a role in epithelial wound healing in the cornea through production of lipoxin A4 (LXA(4)) and docosahexaenoic acid-derived neuroprotectin D1 (NPD1; 10R,17S-HDHA), both lipid autacoids exhibit anti-inflammatory and neuroprotective properties. Furthermore, it may regulate actin polymerization which is crucial for several biological processes such as the phagocytosis of apoptotic cells. It is also implicated in the generation of endogenous ligands for peroxisome proliferator activated receptor (PPAR-gamma), hence modulating macrophage development and function. It may also exert a negative effect on skeletal development by regulating bone mass through this pathway. As well as participates in ER stress and downstream inflammation in adipocytes, pancreatic islets, and liver. Finally, it is also involved in the cellular response to IL13/interleukin-13. The protein is Polyunsaturated fatty acid lipoxygenase ALOX15 of Homo sapiens (Human).